Reading from the N-terminus, the 210-residue chain is Thymidylate kinase (210 aa).

10 to 17 (GPEGAGKS) is a binding site for ATP.

The protein belongs to the thymidylate kinase family.

The enzyme catalyses dTMP + ATP = dTDP + ADP. In terms of biological role, phosphorylation of dTMP to form dTDP in both de novo and salvage pathways of dTTP synthesis. The protein is Thymidylate kinase of Pseudomonas fluorescens (strain SBW25).